Here is a 514-residue protein sequence, read N- to C-terminus: MNLQEEIKKRRTFAIISHPDAGKTTITEQLLYFGGEIREAGTVKGKKTGTFAKSDWMDIEKQRGISVTSSVMQFDYDGKRVNILDTPGHEDFSEDTYRTLMAVDAAVMVVDSAKGIEAQTKKLFEVVKHRGIPVFTFMNKLDRDGREPLDLLQELEEVLGIASYPMNWPIGMGKAFEGLYDLYNQRLELYKGDERFASLEDGDKLFGSNPFYEQVKEDIELLNEAGNEFSEEAILAGDLTPVFFGSALTNFGVQTFLETFLKFAPEPHGHKKTDGEIVDPYDKDFSGFVFKIQANMDPRHRDRIAFVRIVSGEFERGMSVNLPRTGKTAKLSNVTQFMAESRENVTNAVAGDIIGVYDTGTYQVGDTLTVGKNKFEFEPLPTFTPEIFMKVSAKNVMKQKSFHKGIEQLVQEGAIQLYTNYQTGEYMLGAVGQLQFEVFKHRMEGEYNAEVVMTPMGKKTVRWISPDDLDERMSSSRNILAKDRFDQPVFLFENDFALRWFADKYPDVKLEEKM.

The region spanning 8-268 (KKRRTFAIIS…TFLKFAPEPH (261 aa)) is the tr-type G domain. GTP contacts are provided by residues 17–24 (SHPDAGKT), 85–89 (DTPGH), and 139–142 (NKLD).

It belongs to the TRAFAC class translation factor GTPase superfamily. Classic translation factor GTPase family. PrfC subfamily.

It is found in the cytoplasm. Its function is as follows. Increases the formation of ribosomal termination complexes and stimulates activities of RF-1 and RF-2. It binds guanine nucleotides and has strong preference for UGA stop codons. It may interact directly with the ribosome. The stimulation of RF-1 and RF-2 is significantly reduced by GTP and GDP, but not by GMP. In Streptococcus gordonii (strain Challis / ATCC 35105 / BCRC 15272 / CH1 / DL1 / V288), this protein is Peptide chain release factor 3.